The primary structure comprises 169 residues: Required for excision 1-B domain-containing protein (169 aa).

This Mus musculus (Mouse) protein is Required for excision 1-B domain-containing protein.